The following is a 123-amino-acid chain: PTS system glucitol/sorbitol-specific EIIA component (123 aa).

One can recognise a PTS EIIA type-5 domain in the interval 1–116 (MTVIYQTTIT…PDDIAPGSVL (116 aa)). The active-site Tele-phosphohistidine intermediate is H43. H43 is subject to Phosphohistidine; by HPr.

It localises to the cytoplasm. In terms of biological role, the phosphoenolpyruvate-dependent sugar phosphotransferase system (sugar PTS), a major carbohydrate active transport system, catalyzes the phosphorylation of incoming sugar substrates concomitantly with their translocation across the cell membrane. The enzyme II complex composed of SrlA, SrlB and SrlE is involved in glucitol/sorbitol transport. The sequence is that of PTS system glucitol/sorbitol-specific EIIA component (srlB) from Shigella flexneri.